The following is a 177-amino-acid chain: 3-hydroxydecanoyl-[acyl-carrier-protein] dehydratase (177 aa).

His-71 is an active-site residue.

The protein belongs to the thioester dehydratase family. FabA subfamily. In terms of assembly, homodimer.

It localises to the cytoplasm. It catalyses the reaction a (3R)-hydroxyacyl-[ACP] = a (2E)-enoyl-[ACP] + H2O. The catalysed reaction is (3R)-hydroxydecanoyl-[ACP] = (2E)-decenoyl-[ACP] + H2O. It carries out the reaction (2E)-decenoyl-[ACP] = (3Z)-decenoyl-[ACP]. It functions in the pathway lipid metabolism; fatty acid biosynthesis. Functionally, necessary for the introduction of cis unsaturation into fatty acids. Catalyzes the dehydration of (3R)-3-hydroxydecanoyl-ACP to E-(2)-decenoyl-ACP and then its isomerization to Z-(3)-decenoyl-ACP. Can catalyze the dehydratase reaction for beta-hydroxyacyl-ACPs with saturated chain lengths up to 16:0, being most active on intermediate chain length. This chain is 3-hydroxydecanoyl-[acyl-carrier-protein] dehydratase, found in Wigglesworthia glossinidia brevipalpis.